We begin with the raw amino-acid sequence, 411 residues long: Serpin A3-2 (411 aa).

Residues 1-24 (MRAERTSFLLALGLLVAGIRSVHC) form the signal peptide. Residues asparagine 100, asparagine 180, asparagine 230, and asparagine 264 are each glycosylated (N-linked (GlcNAc...) asparagine).

Belongs to the serpin family. Homodimer.

It is found in the cytoplasmic vesicle. It localises to the secretory vesicle. The protein resides in the chromaffin granule. Its subcellular location is the secreted. Serine protease inhibitor. The sequence is that of Serpin A3-2 from Bos taurus (Bovine).